Here is a 155-residue protein sequence, read N- to C-terminus: Microsomal glutathione S-transferase 1 (155 aa).

Residues 3 to 9 are Lumenal-facing; it reads DLRQLMD. A helical transmembrane segment spans residues 10-33; sequence NEVLMAFTSYATIILTKMMFMSSA. Topologically, residues 34–62 are cytoplasmic; it reads TAFQRITNKVFANPEDCAGFGKGENAKKF. Arg38 provides a ligand contact to glutathione. Residues Lys42, Lys55, and Lys60 each carry the N6-acetyllysine modification. Residues 63-96 traverse the membrane as a helical segment; the sequence is VRTDEKVERVRRAHLNDLENIVPFLGIGLLYSLS. Glutathione contacts are provided by Arg73, Arg74, His76, and Glu81. The Lumenal segment spans residues 97–99; it reads GPD. The helical transmembrane segment at 100–123 threads the bilayer; the sequence is LSTALMHFRIFVGARIYHTIAYLT. Glutathione is bound at residue Tyr121. Over 124–128 the chain is Cytoplasmic; that stretch reads PLPQP. The helical transmembrane segment at 129 to 148 threads the bilayer; sequence NRGLAFFVGYGVTLSMAYRL. Over 149-155 the chain is Lumenal; sequence LRSRLYL.

Belongs to the MAPEG family. Homotrimer; The trimer binds only one molecule of glutathione. Acetylation of Lys-42 and Lys-55 is observed in liver mitochondria from fasted mice but not from fed mice. As to expression, expressed in the testes (at protein level).

Its subcellular location is the endoplasmic reticulum membrane. It localises to the mitochondrion outer membrane. It carries out the reaction RX + glutathione = an S-substituted glutathione + a halide anion + H(+). Functionally, conjugation of reduced glutathione to a wide number of exogenous and endogenous hydrophobic electrophiles. This chain is Microsomal glutathione S-transferase 1 (Mgst1), found in Mus musculus (Mouse).